The chain runs to 346 residues: UDP-3-O-acylglucosamine N-acyltransferase (346 aa).

Residue H240 is the Proton acceptor of the active site.

This sequence belongs to the transferase hexapeptide repeat family. LpxD subfamily. As to quaternary structure, homotrimer.

The catalysed reaction is a UDP-3-O-[(3R)-3-hydroxyacyl]-alpha-D-glucosamine + a (3R)-hydroxyacyl-[ACP] = a UDP-2-N,3-O-bis[(3R)-3-hydroxyacyl]-alpha-D-glucosamine + holo-[ACP] + H(+). It functions in the pathway bacterial outer membrane biogenesis; LPS lipid A biosynthesis. In terms of biological role, catalyzes the N-acylation of UDP-3-O-acylglucosamine using 3-hydroxyacyl-ACP as the acyl donor. Is involved in the biosynthesis of lipid A, a phosphorylated glycolipid that anchors the lipopolysaccharide to the outer membrane of the cell. The protein is UDP-3-O-acylglucosamine N-acyltransferase of Bacteroides fragilis (strain YCH46).